The sequence spans 478 residues: Cytochrome c-552 (478 aa).

The signal sequence occupies residues 1-26; the sequence is MARKTLRARRFFSLIFPFFFMTSVYA. Histidine 94 serves as a coordination point for heme c. Heme contacts are provided by cysteine 122, cysteine 125, and lysine 126. The heme c site is built by cysteine 160, cysteine 163, histidine 164, cysteine 209, cysteine 212, and histidine 213. Residues glutamate 215, tyrosine 216, lysine 261, and glutamine 263 each coordinate Ca(2+). Tyrosine 216 is a substrate binding site. Histidine 264 is a binding site for substrate. The heme c site is built by histidine 275, cysteine 282, cysteine 285, histidine 286, histidine 301, cysteine 314, cysteine 317, histidine 318, and histidine 393.

It belongs to the cytochrome c-552 family. Ca(2+) is required as a cofactor. Requires heme c as cofactor.

It is found in the periplasm. The catalysed reaction is 6 Fe(III)-[cytochrome c] + NH4(+) + 2 H2O = 6 Fe(II)-[cytochrome c] + nitrite + 8 H(+). The protein operates within nitrogen metabolism; nitrate reduction (assimilation). Catalyzes the reduction of nitrite to ammonia, consuming six electrons in the process. The protein is Cytochrome c-552 of Salmonella arizonae (strain ATCC BAA-731 / CDC346-86 / RSK2980).